The following is a 633-amino-acid chain: MIQIFLRVKKAQPSSDASNKYGFLTVLNDYEILLESPEDSHAYRVSKSKTLEKASFTKVFPPSCTQLDVFSTICAPLIADSLVNMNDTLLFTLGVSGAGKTYTLFGPSDRPGVAFLALDALFYAIKGREASPQTVEFLRSQLEKCKIVEASKFLRGEAPLDIKVPNTEYYASHFPKIEEKNYQYAIYLSFAEIYNDRIFDLLEKASFFGHRHALSLKKSSTSDKKSIAGIQKVFVSNTTEAYKLIQKVLQLRKSTSTKSNSVSSRSHLIMSIELFKVCTKSNKFESCQIDLVDLAGSERTRSAETSGLLLREGASINRSLLTLGQCLEALRRKHEGKQHIIPFRQSKLTELLFHSGHLSGLAGINMLVNIDPFGSFDENAQVMRYSANAREILPPPLNENSGSQSPSHSLLQKSKNTSSTKALTSHLEQLQQENQQLRMLLADADSEMMNLEYEIRQQMTREMEERVSEVERTFLTKLLEESAQGIEYTDQKLEKMGGWMKKLQDENSEKTETIAQLEQIIEELHEELRSLEEESIKESSATQQNENQHKRSSRKLLYEDKQAIQEAHTINTKRKLWPQSTLIQAPNSDDEENVPSPSPKKKVVSPIKPLSPSRRPPLTSLYSGTTDIDINEL.

Positions 1–392 constitute a Kinesin motor domain; it reads MIQIFLRVKK…MRYSANAREI (392 aa). 94–101 provides a ligand contact to ATP; that stretch reads GVSGAGKT. 3 disordered regions span residues 393–423, 531–556, and 575–633; these read LPPP…TKAL, LEEE…SRKL, and KLWP…INEL. The span at 398–423 shows a compositional bias: polar residues; the sequence is NENSGSQSPSHSLLQKSKNTSSTKAL. Residues 417 to 541 are a coiled coil; the sequence is TSSTKALTSH…EEESIKESSA (125 aa). Polar residues predominate over residues 578 to 587; it reads PQSTLIQAPN. Residues 604–623 show a composition bias toward low complexity; it reads VSPIKPLSPSRRPPLTSLYS. Phosphoserine occurs at positions 605, 611, and 613. A compositionally biased stretch (polar residues) spans 624-633; that stretch reads GTTDIDINEL.

It belongs to the TRAFAC class myosin-kinesin ATPase superfamily. Kinesin family. In terms of assembly, interacts with ase1. Phosphorylated by cdc2 and dephosphorylated by clp1. Dephosphorylation is required for the interaction with ase1.

It localises to the nucleus. Its subcellular location is the cytoplasm. The protein resides in the cytoskeleton. The protein localises to the microtubule organizing center. It is found in the spindle pole body. Kinesin-like motor protein involved in anaphase B spindle elongation. The chain is Kinesin-like motor protein 9 (klp9) from Schizosaccharomyces pombe (strain 972 / ATCC 24843) (Fission yeast).